A 298-amino-acid chain; its full sequence is MLKIGSHVSMSGKKMLLAASEEAVSYGANTFMIYTGAPQNTRRKKIEELNIEAGLAHMKEHGIEEIVVHAPYIINIGNTKNPDTFALGVEFLRSEIERTEAIGAKQIVLHPGAHVGAGPEAGIRKIIEGLNEVLTREQTVQIALETMAGKGSECGRSFEELAQIIDGVTHNEKLSVCFDTCHTHDAGYNIVDDFDGVLEEFDRIIGLDRLKVLHINDSKNPRGSRKDRHENIGFGHIGFAALNYIVHHPQLADIPKILETPYVGEDKNNKKPPYKHEIAMLRAQVFDEELLTKIMNDE.

Positions 69, 110, 145, 179, 182, 214, 227, 229, and 259 each coordinate Zn(2+).

The protein belongs to the AP endonuclease 2 family. It depends on Zn(2+) as a cofactor.

It carries out the reaction Endonucleolytic cleavage to 5'-phosphooligonucleotide end-products.. In terms of biological role, endonuclease IV plays a role in DNA repair. It cleaves phosphodiester bonds at apurinic or apyrimidinic (AP) sites, generating a 3'-hydroxyl group and a 5'-terminal sugar phosphate. This is Probable endonuclease 4 from Geobacillus sp. (strain WCH70).